We begin with the raw amino-acid sequence, 139 residues long: ATP synthase epsilon chain (139 aa).

The disordered stretch occupies residues 89–110 (EARAEQARAEAEARRREAQSEH).

This sequence belongs to the ATPase epsilon chain family. As to quaternary structure, F-type ATPases have 2 components, CF(1) - the catalytic core - and CF(0) - the membrane proton channel. CF(1) has five subunits: alpha(3), beta(3), gamma(1), delta(1), epsilon(1). CF(0) has three main subunits: a, b and c.

The protein resides in the cell membrane. Produces ATP from ADP in the presence of a proton gradient across the membrane. The chain is ATP synthase epsilon chain from Chloroflexus aggregans (strain MD-66 / DSM 9485).